The following is a 616-amino-acid chain: Methylmalonyl-CoA mutase small subunit (616 aa).

This sequence belongs to the methylmalonyl-CoA mutase family. In terms of assembly, heterodimer of an alpha and a beta chain. The cofactor is adenosylcob(III)alamin.

It catalyses the reaction (R)-methylmalonyl-CoA = succinyl-CoA. Its pathway is metabolic intermediate metabolism; propanoyl-CoA degradation; succinyl-CoA from propanoyl-CoA: step 3/3. Functionally, catalyzes the isomerization of succinyl-CoA to methylmalonyl-CoA during synthesis of propionate from tricarboxylic acid-cycle intermediates. This conversion most likely represents an important source of building blocks for polyketide antibiotic biosynthesis. It is unable to catalyze the conversion of isobutyryl-CoA into N-butyryl-CoA. In Streptomyces virginiae (Streptomyces cinnamonensis), this protein is Methylmalonyl-CoA mutase small subunit (mutA).